Here is a 107-residue protein sequence, read N- to C-terminus: Small ribosomal subunit protein bS16m (107 aa).

Belongs to the bacterial ribosomal protein bS16 family. In terms of assembly, component of the mitochondrial small ribosomal subunit (mt-SSU). Mature N.crassa 74S mitochondrial ribosomes consist of a small (37S) and a large (54S) subunit. The 37S small subunit contains a 16S ribosomal RNA (16S mt-rRNA) and 32 different proteins. The 54S large subunit contains a 23S rRNA (23S mt-rRNA) and 42 different proteins.

The protein resides in the mitochondrion. Component of the mitochondrial ribosome (mitoribosome), a dedicated translation machinery responsible for the synthesis of mitochondrial genome-encoded proteins, including at least some of the essential transmembrane subunits of the mitochondrial respiratory chain. The mitoribosomes are attached to the mitochondrial inner membrane and translation products are cotranslationally integrated into the membrane. The polypeptide is Small ribosomal subunit protein bS16m (cyt-21) (Neurospora crassa (strain ATCC 24698 / 74-OR23-1A / CBS 708.71 / DSM 1257 / FGSC 987)).